Reading from the N-terminus, the 747-residue chain is UPF0313 protein PA4928 (747 aa).

The Radical SAM core domain occupies 371–640 (AYEMIRFSVN…KSDQQRRLHK (270 aa)). Cys385, Cys389, and Cys392 together coordinate [4Fe-4S] cluster. Positions 670–747 (GKHHLVPTYQ…KKSRQPNIPR (78 aa)) are disordered.

This sequence belongs to the UPF0313 family. It depends on [4Fe-4S] cluster as a cofactor.

This is UPF0313 protein PA4928 from Pseudomonas aeruginosa (strain ATCC 15692 / DSM 22644 / CIP 104116 / JCM 14847 / LMG 12228 / 1C / PRS 101 / PAO1).